The sequence spans 115 residues: Alpha-endosulfine (115 aa).

Over residues 1–10 (MSSENLSDTQ) the composition is skewed to polar residues. Positions 1-27 (MSSENLSDTQMEYEDEKQDSQEKNANL) are disordered. Serine 65 carries the post-translational modification Phosphoserine; by GWL. Positions 77–115 (NKQLPVAGPDKNLVTGDHIPTPQDLPQRRSSLVTSKLAG) are disordered. The span at 104–115 (RRSSLVTSKLAG) shows a compositional bias: polar residues.

The protein belongs to the endosulfine family. Post-translationally, phosphorylation at Ser-65 by gwl during mitosis is essential for interaction with ppp2r2d (PR55-delta) and subsequent inactivation of PP2A.

The protein localises to the cytoplasm. Its function is as follows. Protein phosphatase inhibitor that specifically inhibits protein phosphatase 2A (PP2A) during mitosis. When phosphorylated at Ser-67 during mitosis, specifically interacts with ppp2r2d (PR55-delta) and inhibits its activity, leading to inactivation of PP2A, an essential condition to keep cyclin-B1-CDK1 activity high during M phase. In Salmo salar (Atlantic salmon), this protein is Alpha-endosulfine (ensa).